The following is a 375-amino-acid chain: MNTNNEETFYQAMRRKGVSRRSFLKYCSLAATSLGLGAAMTPRIAWALENKPRIPVVWIHGLECTCCTESFIRSSHPLAKDVILSLISLDYDDTLMAAAGTQAEEVFEDILSRYHGRYILAVEGNPPLGEQGMFCISGGRPFIEKAKRAAAGASAIIAWGTCASWGCVQAARPNPTQATPIDKVITDKPIVKVPGCPPIPDVMSAIITYMVTFDRLPELDRLGRPLMFYGQRIHDKCYRRAHFDAGEFVESWDDDAARKGYCLYKMGCKGPTTYNACSTTRWNGGVSFPIQSGHGCLGCSENGFWDRGSFYSRVVDIPQMGTHSTADTVGLTALGVVASSVGVHAVASAVNQHNRHKQQLADAGQQSPDNEDKQA.

The tat-type signal signal peptide spans 1 to 47 (MNTNNEETFYQAMRRKGVSRRSFLKYCSLAATSLGLGAAMTPRIAWA). The [4Fe-4S] cluster site is built by cysteine 64, cysteine 67, cysteine 162, cysteine 196, histidine 234, cysteine 237, cysteine 262, and cysteine 268. [3Fe-4S] cluster is bound by residues cysteine 277, cysteine 296, and cysteine 299. Positions 353–375 (HNRHKQQLADAGQQSPDNEDKQA) are disordered.

This sequence belongs to the [NiFe]/[NiFeSe] hydrogenase small subunit family. Heterodimer of a large and a small subunit. The cofactor is [4Fe-4S] cluster. It depends on [3Fe-4S] cluster as a cofactor. In terms of processing, predicted to be exported by the Tat system. The position of the signal peptide cleavage has not been experimentally proven.

The protein localises to the cell membrane. It carries out the reaction H2 + A = AH2. The chain is Hydrogenase-1 small chain (hyaA) from Citrobacter freundii.